Consider the following 184-residue polypeptide: Photosystem I assembly protein Ycf4 (184 aa).

2 consecutive transmembrane segments (helical) span residues Phe-22–Ser-42 and Ile-57–Ser-77.

The protein belongs to the Ycf4 family.

Its subcellular location is the plastid. It is found in the chloroplast thylakoid membrane. In terms of biological role, seems to be required for the assembly of the photosystem I complex. The polypeptide is Photosystem I assembly protein Ycf4 (Lemna minor (Common duckweed)).